Reading from the N-terminus, the 225-residue chain is Orotate phosphoribosyltransferase (225 aa).

5-phospho-alpha-D-ribose 1-diphosphate-binding positions include R107, K108, K111, and 133–141 (EDLTTDGGS). An orotate-binding site is contributed by T137.

This sequence belongs to the purine/pyrimidine phosphoribosyltransferase family. PyrE subfamily. In terms of assembly, homodimer. It depends on Mg(2+) as a cofactor.

The catalysed reaction is orotidine 5'-phosphate + diphosphate = orotate + 5-phospho-alpha-D-ribose 1-diphosphate. Its pathway is pyrimidine metabolism; UMP biosynthesis via de novo pathway; UMP from orotate: step 1/2. Catalyzes the transfer of a ribosyl phosphate group from 5-phosphoribose 1-diphosphate to orotate, leading to the formation of orotidine monophosphate (OMP). The polypeptide is Orotate phosphoribosyltransferase (Roseobacter denitrificans (strain ATCC 33942 / OCh 114) (Erythrobacter sp. (strain OCh 114))).